Here is a 102-residue protein sequence, read N- to C-terminus: Small ribosomal subunit protein uS10 (102 aa).

This sequence belongs to the universal ribosomal protein uS10 family. As to quaternary structure, part of the 30S ribosomal subunit.

Functionally, involved in the binding of tRNA to the ribosomes. The chain is Small ribosomal subunit protein uS10 from Thermoanaerobacter pseudethanolicus (strain ATCC 33223 / 39E) (Clostridium thermohydrosulfuricum).